Here is a 981-residue protein sequence, read N- to C-terminus: Amidohydrolase tasK (981 aa).

The interval 1 to 36 (MDDQKGPLPPYTPTATAPPPASMRQRRPPGRRRALR) is disordered. A compositionally biased stretch (pro residues) spans 7–21 (PLPPYTPTATAPPPA). The span at 24–36 (RQRRPPGRRRALR) shows a compositional bias: basic residues. A helical membrane pass occupies residues 40 to 57 (TVRVLALACLAFVVLAQW). Residues 86–107 (LRVRPQDPAGPGRSKNDRYLDG) form a disordered region. The Fe(2+) site is built by H187 and H189. Zn(2+)-binding residues include H187 and H189. A glycan (N-linked (GlcNAc...) asparagine) is linked at N407. The disordered stretch occupies residues 819–838 (KKQQKQQQQQQQQQQQQHGT). Residues 823–835 (KQQQQQQQQQQQQ) show a composition bias toward low complexity. The N-linked (GlcNAc...) asparagine glycan is linked to N891.

It belongs to the metallo-dependent hydrolases superfamily. Fe(2+) is required as a cofactor. Mn(2+) serves as cofactor. Requires Zn(2+) as cofactor.

Its subcellular location is the membrane. Its function is as follows. Amidohydrolase; part of the gene cluster that mediates the biosynthesis of the tetramic acids Sch210971 and Sch210972, potential anti-HIV fungal natural product that contain a decalin core. The PKS module of tasS together with the enoylreductase tasC catalyze the formation of the polyketide unit which is then conjugated to 4-hydroxyl-4-methyl glutamate (HMG) by the condensation domain of the tasS NRPS module. One unique structural feature of Sch210971 and Sch210972 is the tetramic acid motif proposed to be derived from the non-proteinogenic amino acid HMG, by a Dieckmann-type condensation catalyzed by the reductase domain of tasS. The aldolase tasA catalyzes the aldol condensation of 2 molecules of pyruvic acid to yield the intermediate 4-hydroxyl-4-methyl-2-oxoglutarate (HMOG), which can then be stereoselectively transaminated, may be by tasG, to form HMG. The Diels-Alderase tas3 then uses the Dieckmann product of tasS as substrate and catalyzes the Diels-Alder cycloaddition to form the decalin ring of Sch210971 and Sch210972. The sequence is that of Amidohydrolase tasK from Hapsidospora irregularis.